The primary structure comprises 482 residues: Nuclear transcription factor Y subunit nfya-1 (482 aa).

Residues 1–160 (MNGASRGDVQ…NGSYIQYNEP (160 aa)) form a disordered region. Over residues 72–93 (SSPNVQTQCHQPPVVRSQTHQA) the composition is skewed to polar residues. Low complexity predominate over residues 94–110 (SVSQTTPTQTTPSQYTP). 2 stretches are compositionally biased toward polar residues: residues 126-135 (HVTPSQQQRI) and 144-160 (VSQS…YNEP). The Subunit association domain (SAD) signature appears at 306-329 (LVNPKQFNRIMRRREMRQQLEASG). A DNA-binding region (NFYA/HAP2-type) is located at residues 336–361 (QKYLHESRHLHALKRKRGLDGRFDNT). A disordered region spans residues 344 to 414 (HLHALKRKRG…QPKGGIVNSS (71 aa)). The segment covering 353-362 (GLDGRFDNTK) has biased composition (basic and acidic residues). The segment covering 363 to 375 (TAESSSMVSSTTS) has biased composition (low complexity).

It belongs to the NFYA/HAP2 subunit family. In terms of assembly, forms a heterotrimeric transcription factor complex (nfya-1-NF-Y complex) composed of nfya-1, nfyb-1 and nfyc-1, which binds to 5'-CCAAT-3' box motif in the promoters of its target genes. Interacts with the nfyb-1 and nfyc-1 dimer; the interaction is required for subsequent binding to the 5'-CCAAT-3' box motif in DNA. Does not interact with either nfyb-1 or nfyc-1 in their monomeric form. Interacts with mes-3. Expressed in certain parts of the gonads with high expression in fertilized oocytes in the uterus and mature oocytes from the distal to the proximal arm of the gonad, but weak expression in the syncytial ovaries and immature oocytes at the beginning of the proximal arm of the gonad. Highly expressed in the head ganglia neurons and the developing hermaphrodite vulva and male tail. Weakly expressed in most somatic cells. Not expressed in the intestine, the hypodermis, body wall muscle surrounding the pseudocoelomic space, secretory cells in the pharyngeal terminal bulb wall, in the small ganglia surrounding the pharynx and in the neurons running anteriorly to the sensory organs in the head.

The protein localises to the nucleus. Component of the sequence-specific heterotrimeric transcription factor (nfya-1-NF-Y) which specifically recognizes a 5'-CCAAT-3' box motif found in the promoters of its target genes to regulate their expression and control cellular identity in particular tissue types. In association with the components in the nfya-1-NF-Y complex, represses the expression of the T-box transcription factor tbx-2 throughout larval development, which most likely restricts its expression to certain tissues. May act to repress txb-2 expression in conjunction with tbx-2 itself, which has an autoregulatory role. With the components in this complex, negatively regulates the expression of the homeobox protein egl-5 to spatially restrict its expression in tissues such as the head. May regulate egl-5 expression in association with the mes-2-mes-3-mes-6 complex. This chain is Nuclear transcription factor Y subunit nfya-1, found in Caenorhabditis elegans.